The sequence spans 77 residues: MSEEQLKAFIAKVQADTSLQEQLKAEGADVVAIAKAAGFTITTEDLNSHRQNLTDDELEGVAGGTASGGCDTSMFCY.

The propeptide occupies 1-64 (MSEEQLKAFI…DDELEGVAGG (64 aa)). Residue Thr-65 is modified to 2,3-didehydrobutyrine. Positions 67-70 (SGGC) form a cross-link, lanthionine (Ser-Cys). A cross-link (beta-methyllanthionine (Thr-Cys)) is located at residues 72-76 (TSMFC).

In terms of processing, cross-links are proved in vitro, when coepressed in E.coli with the ProcM lanthionine synthetase. The lanthionine residue has both a DL configuration (with 2S,6R stereochemistry) and a LL configuration (with 2R,6R stereochemistry). DL and LL diastomers have a 4:1 ratio. It is unknown whether nonenzymatic cyclization occur, but authors favor a model in which ProcM does generate all thioether cross-links. The beta-methyllanthionine residue has a DL configuration (with 2S,3S,6R stereochemistry). Post-translationally, maturation of prochlorosin involves the enzymatic conversion of Thr, and Ser into dehydrated AA and the formation of thioether bonds with cysteines. This is followed by membrane translocation and cleavage of the modified precursor.

The protein localises to the secreted. Lanthionine-containing peptide (lantipeptide) with unknown function. Does not show antibiotic activity against Lactococcus lactis 117 and Bacillus subtilis 6633 bacteria. Organisms that produce this peptide live in oligotrophic environments at very dilute concentrations, suggesting this peptide is not secreted to influence other bacteria. This is Lantipeptide prochlorosin 4.3 from Prochlorococcus marinus (strain MIT 9313).